A 119-amino-acid chain; its full sequence is Protein TusC (119 aa).

It belongs to the DsrF/TusC family. Heterohexamer, formed by a dimer of trimers. The hexameric TusBCD complex contains 2 copies each of TusB, TusC and TusD. The TusBCD complex interacts with TusE.

The protein resides in the cytoplasm. Its function is as follows. Part of a sulfur-relay system required for 2-thiolation of 5-methylaminomethyl-2-thiouridine (mnm(5)s(2)U) at tRNA wobble positions. The protein is Protein TusC of Escherichia coli O8 (strain IAI1).